Consider the following 258-residue polypeptide: Regulatory protein RecX (258 aa).

The protein belongs to the RecX family.

It is found in the cytoplasm. Its function is as follows. Modulates RecA activity. This chain is Regulatory protein RecX, found in Streptococcus pneumoniae (strain 70585).